The sequence spans 155 residues: Probable Brix domain-containing ribosomal biogenesis protein (155 aa).

The Brix domain occupies 1 to 155; sequence MLITSSRKPS…KNYRKMVMSE (155 aa).

Probably involved in the biogenesis of the ribosome. This chain is Probable Brix domain-containing ribosomal biogenesis protein, found in Methanococcoides burtonii (strain DSM 6242 / NBRC 107633 / OCM 468 / ACE-M).